The following is a 339-amino-acid chain: F420-dependent glucose-6-phosphate dehydrogenase (339 aa).

Asp41 is a coenzyme F420-(gamma-Glu)n binding site. His42 serves as the catalytic Proton donor. Residues Thr78 and 109–110 (TG) contribute to the coenzyme F420-(gamma-Glu)n site. Glu111 serves as the catalytic Proton acceptor. Coenzyme F420-(gamma-Glu)n contacts are provided by residues Asn114, 177-178 (SG), and 180-181 (AA). Positions 195, 198, 259, and 283 each coordinate substrate.

Belongs to the F420-dependent glucose-6-phosphate dehydrogenase family. In terms of assembly, homodimer.

It catalyses the reaction oxidized coenzyme F420-(gamma-L-Glu)(n) + D-glucose 6-phosphate + H(+) = 6-phospho-D-glucono-1,5-lactone + reduced coenzyme F420-(gamma-L-Glu)(n). Its function is as follows. Catalyzes the coenzyme F420-dependent oxidation of glucose 6-phosphate (G6P) to 6-phosphogluconolactone. This is F420-dependent glucose-6-phosphate dehydrogenase from Nakamurella multipartita (strain ATCC 700099 / DSM 44233 / CIP 104796 / JCM 9543 / NBRC 105858 / Y-104) (Microsphaera multipartita).